Reading from the N-terminus, the 249-residue chain is Tetrahydromethanopterin S-methyltransferase subunit D (249 aa).

Transmembrane regions (helical) follow at residues 9–29 (ILWLVFIIIGGVLISWSVHFV), 47–67 (GTVQLAAGAGLTGLVSAGFMM), 75–95 (LILASGAVGAMIMISVTMIVG), 138–158 (VSFVSGVIGGLLGGIGGALVY), 183–203 (LVGIAAMFAIGIFFVNAVIPS), and 224–244 (AVISSFVATILCAIVAVIAIS).

Belongs to the MtrD family. The complex is composed of 8 subunits; MtrA, MtrB, MtrC, MtrD, MtrE, MtrF, MtrG and MtrH.

It is found in the cell membrane. The catalysed reaction is 5-methyl-5,6,7,8-tetrahydromethanopterin + coenzyme M + 2 Na(+)(in) = 5,6,7,8-tetrahydromethanopterin + methyl-coenzyme M + 2 Na(+)(out). The protein operates within one-carbon metabolism; methanogenesis from CO(2); methyl-coenzyme M from 5,10-methylene-5,6,7,8-tetrahydromethanopterin: step 2/2. Part of a complex that catalyzes the formation of methyl-coenzyme M and tetrahydromethanopterin from coenzyme M and methyl-tetrahydromethanopterin. This is an energy-conserving, sodium-ion translocating step. The protein is Tetrahydromethanopterin S-methyltransferase subunit D of Methanosarcina acetivorans (strain ATCC 35395 / DSM 2834 / JCM 12185 / C2A).